The primary structure comprises 641 residues: Calpain-6 (641 aa).

One can recognise a Calpain catalytic domain in the interval 26-343; that stretch reads LFCDPTFLPE…FHKLNVCRNV (318 aa). The tract at residues 344–495 is domain III; that stretch reads NNPVFGRKEL…IFSEVPVQLR (152 aa). Positions 498-621 constitute a C2 domain; that stretch reads TLDMPKMSCW…YLRKKGGPTA (124 aa).

This sequence belongs to the peptidase C2 family. As to quaternary structure, interacts (via domain III) with microtubules. Interacts (via domain II) with ARHGEF2 (via the N-terminal zinc finger).

It is found in the cytoplasm. It localises to the perinuclear region. The protein resides in the cytoskeleton. Its subcellular location is the spindle. Its function is as follows. Microtubule-stabilizing protein that may be involved in the regulation of microtubule dynamics and cytoskeletal organization. May act as a regulator of RAC1 activity through interaction with ARHGEF2 to control lamellipodial formation and cell mobility. Does not seem to have protease activity as it has lost the active site residues. The protein is Calpain-6 (Capn6) of Mus musculus (Mouse).